A 270-amino-acid polypeptide reads, in one-letter code: uncharacterized protein (270 aa).

The signal sequence occupies residues 1–23 (MFNFITFILFAVVCISYCHKSRG). N-linked (GlcNAc...) asparagine glycans are attached at residues Asn-246 and Asn-252.

The protein localises to the secreted. This is an uncharacterized protein from Caenorhabditis elegans.